A 560-amino-acid polypeptide reads, in one-letter code: Oxygen-dependent choline dehydrogenase 1 (560 aa).

8–37 (DYIIIGAGSAGNVLATRLTEDPDVQVLLLE) contacts FAD. Catalysis depends on His-475, which acts as the Proton acceptor.

The protein belongs to the GMC oxidoreductase family. Requires FAD as cofactor.

It carries out the reaction choline + A = betaine aldehyde + AH2. The catalysed reaction is betaine aldehyde + NAD(+) + H2O = glycine betaine + NADH + 2 H(+). The protein operates within amine and polyamine biosynthesis; betaine biosynthesis via choline pathway; betaine aldehyde from choline (cytochrome c reductase route): step 1/1. In terms of biological role, involved in the biosynthesis of the osmoprotectant glycine betaine. Catalyzes the oxidation of choline to betaine aldehyde and betaine aldehyde to glycine betaine at the same rate. The sequence is that of Oxygen-dependent choline dehydrogenase 1 from Chromohalobacter salexigens (strain ATCC BAA-138 / DSM 3043 / CIP 106854 / NCIMB 13768 / 1H11).